A 247-amino-acid polypeptide reads, in one-letter code: Probable transcriptional regulatory protein GM21_0933 (247 aa).

Belongs to the TACO1 family.

The protein localises to the cytoplasm. The chain is Probable transcriptional regulatory protein GM21_0933 from Geobacter sp. (strain M21).